A 283-amino-acid chain; its full sequence is Pantothenate synthetase (283 aa).

30–37 (MGNLHDGH) contributes to the ATP binding site. Catalysis depends on H37, which acts as the Proton donor. Residue Q61 participates in (R)-pantoate binding. Q61 serves as a coordination point for beta-alanine. 149 to 152 (GEKD) is a binding site for ATP. Q155 is a binding site for (R)-pantoate. 186–189 (LSSR) is an ATP binding site.

It belongs to the pantothenate synthetase family. In terms of assembly, homodimer.

The protein localises to the cytoplasm. It catalyses the reaction (R)-pantoate + beta-alanine + ATP = (R)-pantothenate + AMP + diphosphate + H(+). The protein operates within cofactor biosynthesis; (R)-pantothenate biosynthesis; (R)-pantothenate from (R)-pantoate and beta-alanine: step 1/1. Its function is as follows. Catalyzes the condensation of pantoate with beta-alanine in an ATP-dependent reaction via a pantoyl-adenylate intermediate. The polypeptide is Pantothenate synthetase (Escherichia coli O6:H1 (strain CFT073 / ATCC 700928 / UPEC)).